The following is a 549-amino-acid chain: Probable protein kinase UbiB (549 aa).

The Protein kinase domain occupies 123–501 (DFNEIPLASA…QQQAHKSNYL (379 aa)). ATP contacts are provided by residues 129–137 (LASASISQV) and lysine 152. Aspartate 287 (proton acceptor) is an active-site residue. 2 consecutive transmembrane segments (helical) span residues 496 to 516 (HKSNYLLITSAVLLICGTLLI) and 520 to 540 (ATLWTPYVCLVSGIILWFVGW).

Belongs to the ABC1 family. UbiB subfamily.

The protein resides in the cell inner membrane. The protein operates within cofactor biosynthesis; ubiquinone biosynthesis [regulation]. Functionally, is probably a protein kinase regulator of UbiI activity which is involved in aerobic coenzyme Q (ubiquinone) biosynthesis. The chain is Probable protein kinase UbiB from Shewanella baltica (strain OS223).